A 69-amino-acid polypeptide reads, in one-letter code: Guanine nucleotide-binding protein G(I)/G(S)/G(O) subunit gamma-T2 (69 aa).

Residues 47–69 (DPLLKGIPEDKNPFKEKGGCMIS) form a disordered region. Basic and acidic residues predominate over residues 53 to 69 (IPEDKNPFKEKGGCMIS). Cysteine 66 is modified (cysteine methyl ester). Cysteine 66 carries S-farnesyl cysteine lipidation. The propeptide at 67–69 (MIS) is removed in mature form.

Belongs to the G protein gamma family. G proteins are composed of 3 units, alpha, beta and gamma.

The protein resides in the cell membrane. In terms of biological role, guanine nucleotide-binding proteins (G proteins) are involved as a modulator or transducer in various transmembrane signaling systems. The beta and gamma chains are required for the GTPase activity, for replacement of GDP by GTP, and for G protein-effector interaction. This is Guanine nucleotide-binding protein G(I)/G(S)/G(O) subunit gamma-T2 (GNGT2) from Canis lupus familiaris (Dog).